The primary structure comprises 250 residues: Ubiquinone/menaquinone biosynthesis C-methyltransferase UbiE (250 aa).

S-adenosyl-L-methionine-binding positions include Thr-73, Asp-94, and 122 to 123; that span reads DA.

Belongs to the class I-like SAM-binding methyltransferase superfamily. MenG/UbiE family.

The catalysed reaction is a 2-demethylmenaquinol + S-adenosyl-L-methionine = a menaquinol + S-adenosyl-L-homocysteine + H(+). It catalyses the reaction a 2-methoxy-6-(all-trans-polyprenyl)benzene-1,4-diol + S-adenosyl-L-methionine = a 5-methoxy-2-methyl-3-(all-trans-polyprenyl)benzene-1,4-diol + S-adenosyl-L-homocysteine + H(+). It functions in the pathway quinol/quinone metabolism; menaquinone biosynthesis; menaquinol from 1,4-dihydroxy-2-naphthoate: step 2/2. It participates in cofactor biosynthesis; ubiquinone biosynthesis. Functionally, methyltransferase required for the conversion of demethylmenaquinol (DMKH2) to menaquinol (MKH2) and the conversion of 2-polyprenyl-6-methoxy-1,4-benzoquinol (DDMQH2) to 2-polyprenyl-3-methyl-6-methoxy-1,4-benzoquinol (DMQH2). The chain is Ubiquinone/menaquinone biosynthesis C-methyltransferase UbiE from Coxiella burnetii (strain RSA 331 / Henzerling II).